Consider the following 138-residue polypeptide: Cysteine desulfuration protein SufE (138 aa).

Residue C51 is the Cysteine persulfide intermediate of the active site.

This sequence belongs to the SufE family. In terms of assembly, homodimer. Interacts with SufS.

Its subcellular location is the cytoplasm. It participates in cofactor biosynthesis; iron-sulfur cluster biosynthesis. Participates in cysteine desulfuration mediated by SufS. Cysteine desulfuration mobilizes sulfur from L-cysteine to yield L-alanine and constitutes an essential step in sulfur metabolism for biosynthesis of a variety of sulfur-containing biomolecules. Functions as a sulfur acceptor for SufS, by mediating the direct transfer of the sulfur atom from the S-sulfanylcysteine of SufS, an intermediate product of cysteine desulfuration process. This Sodalis glossinidius (strain morsitans) protein is Cysteine desulfuration protein SufE.